The primary structure comprises 130 residues: Small ribosomal subunit protein uS11 (130 aa).

This sequence belongs to the universal ribosomal protein uS11 family. Part of the 30S ribosomal subunit. Interacts with proteins S7 and S18. Binds to IF-3.

Its function is as follows. Located on the platform of the 30S subunit, it bridges several disparate RNA helices of the 16S rRNA. Forms part of the Shine-Dalgarno cleft in the 70S ribosome. This is Small ribosomal subunit protein uS11 from Blochmanniella floridana.